The chain runs to 495 residues: UDP-N-acetylmuramoyl-L-alanyl-D-glutamate--2,6-diaminopimelate ligase (495 aa).

UDP-N-acetyl-alpha-D-muramoyl-L-alanyl-D-glutamate contacts are provided by Leu32 and Ser34. 119 to 125 (GTNGKTT) provides a ligand contact to ATP. Residues Asn160, 161-162 (TT), Ser188, Gln194, and Arg196 contribute to the UDP-N-acetyl-alpha-D-muramoyl-L-alanyl-D-glutamate site. An N6-carboxylysine modification is found at Lys228. Meso-2,6-diaminopimelate is bound by residues Arg390, 414-417 (DNPR), Gly465, and Glu469. Residues 414–417 (DNPR) carry the Meso-diaminopimelate recognition motif motif.

The protein belongs to the MurCDEF family. MurE subfamily. Mg(2+) serves as cofactor. Carboxylation is probably crucial for Mg(2+) binding and, consequently, for the gamma-phosphate positioning of ATP.

It localises to the cytoplasm. The enzyme catalyses UDP-N-acetyl-alpha-D-muramoyl-L-alanyl-D-glutamate + meso-2,6-diaminopimelate + ATP = UDP-N-acetyl-alpha-D-muramoyl-L-alanyl-gamma-D-glutamyl-meso-2,6-diaminopimelate + ADP + phosphate + H(+). The protein operates within cell wall biogenesis; peptidoglycan biosynthesis. Its function is as follows. Catalyzes the addition of meso-diaminopimelic acid to the nucleotide precursor UDP-N-acetylmuramoyl-L-alanyl-D-glutamate (UMAG) in the biosynthesis of bacterial cell-wall peptidoglycan. In Vibrio cholerae serotype O1 (strain ATCC 39315 / El Tor Inaba N16961), this protein is UDP-N-acetylmuramoyl-L-alanyl-D-glutamate--2,6-diaminopimelate ligase.